The following is a 794-amino-acid chain: Cilia- and flagella-associated protein 184 (794 aa).

2 disordered regions span residues 1 to 105 and 386 to 458; these read MASE…VNSE and AHEE…QQDT. The span at 24 to 35 shows a compositional bias: low complexity; the sequence is QMQQYMMEMQRQ. Residues 49-69 show a composition bias toward acidic residues; sequence EGYEEGQEGEGYGEEYGDQDY. Composition is skewed to basic and acidic residues over residues 89–103, 386–411, and 431–445; these read QVNE…RRVN, AHEE…KDYG, and ISDK…HAEQ. Residues 446-456 are compositionally biased toward low complexity; sequence EQNQQAAQQQQ. 2 coiled-coil regions span residues 461 to 613 and 638 to 775; these read NKEI…LRLR and FEQL…ANQI. The span at 774–787 shows a compositional bias: polar residues; the sequence is QISTQNMQSQNNSL. The tract at residues 774 to 794 is disordered; the sequence is QISTQNMQSQNNSLKKPYQPY.

This sequence belongs to the CFAP184 family. As to quaternary structure, forms a complex with CFAP263; the interaction is required for functional activity in cilia.

The protein localises to the cell projection. The protein resides in the cilium. In complex with CFAP263, acts as a regulator of ciliary beating that connects radial spoke 3 (RS3) to the inner dynein arm (IDA) and the nexin-dynein regulatory complex (N-DRC). The complex is positioned parallel to N-DRC and forms a connection between the arch at the base of RS3, the IDA tail and N-DRC. The chain is Cilia- and flagella-associated protein 184 (CFAP184) from Tetrahymena thermophila (strain SB210).